The chain runs to 140 residues: Anti-sigma F factor (140 aa).

This sequence belongs to the anti-sigma-factor family.

The catalysed reaction is L-seryl-[protein] + ATP = O-phospho-L-seryl-[protein] + ADP + H(+). The enzyme catalyses L-threonyl-[protein] + ATP = O-phospho-L-threonyl-[protein] + ADP + H(+). Functionally, binds to sigma F and blocks its ability to form an RNA polymerase holoenzyme (E-sigma F). Phosphorylates SpoIIAA on a serine residue. This phosphorylation may enable SpoIIAA to act as an anti-anti-sigma factor that counteracts SpoIIAB and thus releases sigma F from inhibition. The sequence is that of Anti-sigma F factor from Clostridium perfringens (strain ATCC 13124 / DSM 756 / JCM 1290 / NCIMB 6125 / NCTC 8237 / Type A).